The sequence spans 280 residues: DegV domain-containing protein SPy_1698/M5005_Spy1391 (280 aa).

A DegV domain is found at 3-280 (WKIVTDSGCD…DGGLLMGYEI (278 aa)). The hexadecanoate site is built by Ser63 and Ser91.

Functionally, may bind long-chain fatty acids, such as palmitate, and may play a role in lipid transport or fatty acid metabolism. The protein is DegV domain-containing protein SPy_1698/M5005_Spy1391 of Streptococcus pyogenes serotype M1.